Reading from the N-terminus, the 362-residue chain is 3-dehydroquinate synthase (362 aa).

Residues 71–76 (DGEQYK), 105–109 (GVVGD), 129–130 (TT), K142, K151, and 169–172 (CLKT) each bind NAD(+). Residues E184, H247, and H264 each coordinate Zn(2+).

The protein belongs to the sugar phosphate cyclases superfamily. Dehydroquinate synthase family. It depends on Co(2+) as a cofactor. The cofactor is Zn(2+). NAD(+) serves as cofactor.

It localises to the cytoplasm. It catalyses the reaction 7-phospho-2-dehydro-3-deoxy-D-arabino-heptonate = 3-dehydroquinate + phosphate. The protein operates within metabolic intermediate biosynthesis; chorismate biosynthesis; chorismate from D-erythrose 4-phosphate and phosphoenolpyruvate: step 2/7. Catalyzes the conversion of 3-deoxy-D-arabino-heptulosonate 7-phosphate (DAHP) to dehydroquinate (DHQ). This Escherichia coli (strain 55989 / EAEC) protein is 3-dehydroquinate synthase.